The sequence spans 500 residues: L-2-amino-4-chloropent-4-enoate dechlorinase/desaturase (500 aa).

Lys311 carries the post-translational modification N6-(pyridoxal phosphate)lysine.

This sequence belongs to the trans-sulfuration enzymes family. Pyridoxal 5'-phosphate is required as a cofactor.

It catalyses the reaction L-2-amino-4-chloropent-4-enoate = L-propargylglycine + chloride + H(+). It functions in the pathway amino-acid metabolism. It participates in antibiotic biosynthesis. In terms of biological role, involved in the biosynthesis of terminal alkyne-containing amino acids such as L-propargylglycine (Pra) and L-beta-ethynylserine, that are produced as antibiotics by S.cattleya. Catalyzes gamma-elimination of chloride from 4-chloro-allyl-L-glycine (also named L-2-amino-4-chloropent-4-enoate), followed by an isomerization, to form the terminal-alkyne product L-propargylglycine. The chain is L-2-amino-4-chloropent-4-enoate dechlorinase/desaturase from Streptantibioticus cattleyicolor (strain ATCC 35852 / DSM 46488 / JCM 4925 / NBRC 14057 / NRRL 8057) (Streptomyces cattleya).